Here is a 217-residue protein sequence, read N- to C-terminus: Adenylate kinase (217 aa).

10–15 (GAGKGT) contacts ATP. The tract at residues 30-59 (STGEILRAAVKSKTPMGVKAKEYMDQGALV) is NMP. AMP is bound by residues threonine 31, arginine 36, 57 to 59 (ALV), 85 to 88 (GFPR), and glutamine 92. The tract at residues 126-163 (GRRVCRACGRAFHVKFDPPLVDGVCDACGGELYQRDDD) is LID. Residue arginine 127 participates in ATP binding. Zn(2+) is bound by residues cysteine 130, cysteine 133, cysteine 150, and cysteine 153. Residues arginine 160 and arginine 171 each coordinate AMP. Glutamate 199 contacts ATP.

It belongs to the adenylate kinase family. As to quaternary structure, monomer.

It is found in the cytoplasm. The enzyme catalyses AMP + ATP = 2 ADP. It functions in the pathway purine metabolism; AMP biosynthesis via salvage pathway; AMP from ADP: step 1/1. Functionally, catalyzes the reversible transfer of the terminal phosphate group between ATP and AMP. Plays an important role in cellular energy homeostasis and in adenine nucleotide metabolism. In Geobacter sulfurreducens (strain ATCC 51573 / DSM 12127 / PCA), this protein is Adenylate kinase.